The chain runs to 505 residues: Ribosomal RNA small subunit methyltransferase F (505 aa).

Residues 123 to 129, E147, D174, and D192 each bind S-adenosyl-L-methionine; that span reads ASAPGSK. The active-site Nucleophile is C245. The interval 409 to 437 is disordered; it reads GTNANNNSNTNPNNNANTNPNNNSNTNPR. The span at 410-435 shows a compositional bias: low complexity; sequence TNANNNSNTNPNNNANTNPNNNSNTN.

The protein belongs to the class I-like SAM-binding methyltransferase superfamily. RsmB/NOP family.

The protein localises to the cytoplasm. The catalysed reaction is cytidine(1407) in 16S rRNA + S-adenosyl-L-methionine = 5-methylcytidine(1407) in 16S rRNA + S-adenosyl-L-homocysteine + H(+). Its function is as follows. Specifically methylates the cytosine at position 1407 (m5C1407) of 16S rRNA. This is Ribosomal RNA small subunit methyltransferase F from Shewanella denitrificans (strain OS217 / ATCC BAA-1090 / DSM 15013).